A 327-amino-acid polypeptide reads, in one-letter code: uncharacterized protein (327 aa).

Residues 1 to 17 (MASMAAAIAASRSAVMS) are compositionally biased toward low complexity. A disordered region spans residues 1-22 (MASMAAAIAASRSAVMSGNRPL). Ala-2 carries the post-translational modification N-acetylalanine. A Phosphoserine modification is found at Ser-37. The segment at 76 to 113 (GPRAPAPRDPGDSEELTRFPGLRGPTGQKVVRFGDEDL) is disordered. Phosphoserine is present on Ser-129. A compositionally biased stretch (polar residues) spans 134–148 (SISALSIQEPSNGTA). The segment at 134 to 299 (SISALSIQEP…PDVRQDDGED (166 aa)) is disordered. Residues 162-176 (SQALKSSQGSRSSSL) show a composition bias toward low complexity. Position 175 is a phosphoserine (Ser-175). 2 stretches are compositionally biased toward basic and acidic residues: residues 182-202 (TRKE…RGEG) and 233-252 (PAPK…RQEQ). Ser-289 carries the phosphoserine modification.

The protein resides in the cytoplasm. This is an uncharacterized protein from Homo sapiens (Human).